The primary structure comprises 369 residues: Aminomethyltransferase (369 aa).

It belongs to the GcvT family. In terms of assembly, the glycine cleavage system is composed of four proteins: P, T, L and H.

The enzyme catalyses N(6)-[(R)-S(8)-aminomethyldihydrolipoyl]-L-lysyl-[protein] + (6S)-5,6,7,8-tetrahydrofolate = N(6)-[(R)-dihydrolipoyl]-L-lysyl-[protein] + (6R)-5,10-methylene-5,6,7,8-tetrahydrofolate + NH4(+). In terms of biological role, the glycine cleavage system catalyzes the degradation of glycine. The sequence is that of Aminomethyltransferase from Rippkaea orientalis (strain PCC 8801 / RF-1) (Cyanothece sp. (strain PCC 8801)).